The chain runs to 474 residues: tRNA-2-methylthio-N(6)-dimethylallyladenosine synthase (474 aa).

In terms of domain architecture, MTTase N-terminal spans 3–120 (KKLHIKTWGC…LPEMINSVRG (118 aa)). [4Fe-4S] cluster is bound by residues cysteine 12, cysteine 49, cysteine 83, cysteine 157, cysteine 161, and cysteine 164. In terms of domain architecture, Radical SAM core spans 143–375 (RAEGPTAFVS…QERINQQAMA (233 aa)). A TRAM domain is found at 378 to 441 (RRMLGTTQRI…PNSLRGKVVR (64 aa)).

This sequence belongs to the methylthiotransferase family. MiaB subfamily. Monomer. Requires [4Fe-4S] cluster as cofactor.

The protein localises to the cytoplasm. It catalyses the reaction N(6)-dimethylallyladenosine(37) in tRNA + (sulfur carrier)-SH + AH2 + 2 S-adenosyl-L-methionine = 2-methylsulfanyl-N(6)-dimethylallyladenosine(37) in tRNA + (sulfur carrier)-H + 5'-deoxyadenosine + L-methionine + A + S-adenosyl-L-homocysteine + 2 H(+). Functionally, catalyzes the methylthiolation of N6-(dimethylallyl)adenosine (i(6)A), leading to the formation of 2-methylthio-N6-(dimethylallyl)adenosine (ms(2)i(6)A) at position 37 in tRNAs that read codons beginning with uridine. The chain is tRNA-2-methylthio-N(6)-dimethylallyladenosine synthase from Escherichia coli (strain UTI89 / UPEC).